Here is a 321-residue protein sequence, read N- to C-terminus: Large ribosomal subunit protein uL3 (321 aa).

The protein belongs to the universal ribosomal protein uL3 family. As to quaternary structure, part of the 50S ribosomal subunit. Forms a cluster with proteins L14 and L24e.

In terms of biological role, one of the primary rRNA binding proteins, it binds directly near the 3'-end of the 23S rRNA, where it nucleates assembly of the 50S subunit. The chain is Large ribosomal subunit protein uL3 from Nanoarchaeum equitans (strain Kin4-M).